The following is a 486-amino-acid chain: 2-isopropylmalate synthase (486 aa).

The 263-residue stretch at 4–266 folds into the Pyruvate carboxyltransferase domain; it reads VYIFDTTLRD…KTDVNLKEIA (263 aa). 4 residues coordinate Mn(2+): D13, H201, H203, and N237. The tract at residues 390 to 486 is regulatory domain; sequence KVEIIHVTSG…LSTDIIEASA (97 aa).

This sequence belongs to the alpha-IPM synthase/homocitrate synthase family. LeuA type 1 subfamily. It depends on Mn(2+) as a cofactor.

The protein localises to the cytoplasm. It catalyses the reaction 3-methyl-2-oxobutanoate + acetyl-CoA + H2O = (2S)-2-isopropylmalate + CoA + H(+). It functions in the pathway amino-acid biosynthesis; L-leucine biosynthesis; L-leucine from 3-methyl-2-oxobutanoate: step 1/4. Catalyzes the condensation of the acetyl group of acetyl-CoA with 3-methyl-2-oxobutanoate (2-ketoisovalerate) to form 3-carboxy-3-hydroxy-4-methylpentanoate (2-isopropylmalate). The chain is 2-isopropylmalate synthase from Pyrococcus abyssi (strain GE5 / Orsay).